The primary structure comprises 181 residues: tRNA (cytidine(56)-2'-O)-methyltransferase (181 aa).

S-adenosyl-L-methionine contacts are provided by residues Leu-88, 115-119 (GGEKV), and 133-140 (IGNQPHSE).

This sequence belongs to the aTrm56 family. Homodimer.

It localises to the cytoplasm. The enzyme catalyses cytidine(56) in tRNA + S-adenosyl-L-methionine = 2'-O-methylcytidine(56) in tRNA + S-adenosyl-L-homocysteine + H(+). Specifically catalyzes the AdoMet-dependent 2'-O-ribose methylation of cytidine at position 56 in tRNAs. This chain is tRNA (cytidine(56)-2'-O)-methyltransferase, found in Thermofilum pendens (strain DSM 2475 / Hrk 5).